We begin with the raw amino-acid sequence, 204 residues long: Putative 3-methyladenine DNA glycosylase (204 aa).

Belongs to the DNA glycosylase MPG family.

In Bacillus mycoides (strain KBAB4) (Bacillus weihenstephanensis), this protein is Putative 3-methyladenine DNA glycosylase.